A 363-amino-acid polypeptide reads, in one-letter code: Ribosomal RNA large subunit methyltransferase M (363 aa).

S-adenosyl-L-methionine contacts are provided by residues serine 194, 227–230 (CPGG), aspartate 246, aspartate 266, and aspartate 284. Lysine 313 serves as the catalytic Proton acceptor.

This sequence belongs to the class I-like SAM-binding methyltransferase superfamily. RNA methyltransferase RlmE family. RlmM subfamily. As to quaternary structure, monomer.

It localises to the cytoplasm. It carries out the reaction cytidine(2498) in 23S rRNA + S-adenosyl-L-methionine = 2'-O-methylcytidine(2498) in 23S rRNA + S-adenosyl-L-homocysteine + H(+). In terms of biological role, catalyzes the 2'-O-methylation at nucleotide C2498 in 23S rRNA. The chain is Ribosomal RNA large subunit methyltransferase M from Haemophilus influenzae (strain PittEE).